Here is a 554-residue protein sequence, read N- to C-terminus: Acurin A biosynthesis cluster MFS-type transporter (554 aa).

The next 5 helical transmembrane spans lie at 24 to 44, 60 to 80, 96 to 116, 123 to 143, and 151 to 171; these read WLIF…TSII, LYIW…AIVG, LLIF…GMLL, GLGG…MVSL, and GILG…GGGF. Asparagine 174 carries an N-linked (GlcNAc...) asparagine glycan. 3 helical membrane-spanning segments follow: residues 179 to 199, 219 to 239, and 251 to 271; these read WIFY…VTLL, WGGI…LTWA, and IVPL…EALP. An N-linked (GlcNAc...) asparagine glycan is attached at asparagine 283. 6 helical membrane-spanning segments follow: residues 289 to 309, 324 to 344, 352 to 372, 385 to 405, 417 to 437, and 496 to 516; these read LFVM…FLPI, VMLF…GILM, SFQY…TLLD, ILFG…ILAS, TWIF…AAVF, and VWQV…LVKA.

The protein belongs to the major facilitator superfamily.

The protein resides in the membrane. Functionally, MFS-type transporter that may have a role in the biosynthesis of acurin A, a highly reduced polyketide coupled to a serine via a peptide bond; either in extra- or intracellular transport. The sequence is that of Acurin A biosynthesis cluster MFS-type transporter from Aspergillus aculeatus (strain ATCC 16872 / CBS 172.66 / WB 5094).